Consider the following 254-residue polypeptide: MASTSNRNFFSSNMTQIPMDEKIRIALQFNNLSQSTKQTLTKVYCALAIGILTATVGVLFSMFIYRPGFLMTLLLVIGSAILFATTPRTQDYKTQVKRFTLFNLVTFVTGMSSSGLIELYMDINSSIVLNAFMATCGIFISFTLFSLLTNKRLYIFIGSSLASLSIGIFVLALTRLFGGYSEPLDQLFILAILASSVLFIIFDTQIMVHRIENLGEKDVLFHAFILFYDFVDLFRVILKILAKKENKNNNKSRR.

The Cytoplasmic portion of the chain corresponds to 1–43; it reads MASTSNRNFFSSNMTQIPMDEKIRIALQFNNLSQSTKQTLTKV. The helical transmembrane segment at 44–64 threads the bilayer; that stretch reads YCALAIGILTATVGVLFSMFI. Residues 65-66 lie on the Lumenal side of the membrane; the sequence is YR. A helical transmembrane segment spans residues 67-87; sequence PGFLMTLLLVIGSAILFATTP. At 88–98 the chain is on the cytoplasmic side; that stretch reads RTQDYKTQVKR. The helical transmembrane segment at 99-119 threads the bilayer; sequence FTLFNLVTFVTGMSSSGLIEL. Over 120 to 126 the chain is Lumenal; that stretch reads YMDINSS. A helical membrane pass occupies residues 127–147; it reads IVLNAFMATCGIFISFTLFSL. The Cytoplasmic portion of the chain corresponds to 148 to 152; it reads LTNKR. Residues 153 to 173 form a helical membrane-spanning segment; sequence LYIFIGSSLASLSIGIFVLAL. At 174–187 the chain is on the lumenal side; sequence TRLFGGYSEPLDQL. Residues 188–208 form a helical membrane-spanning segment; sequence FILAILASSVLFIIFDTQIMV. Over 209–217 the chain is Cytoplasmic; sequence HRIENLGEK. Residues 218–238 constitute an intramembrane region (helical); it reads DVLFHAFILFYDFVDLFRVIL. Over 239-254 the chain is Cytoplasmic; the sequence is KILAKKENKNNNKSRR.

It belongs to the BI1 family.

It is found in the endoplasmic reticulum membrane. This is Bax inhibitor 1 homolog from Dictyostelium discoideum (Social amoeba).